Consider the following 322-residue polypeptide: Germ cell-specific gene 1-like protein (322 aa).

The Cytoplasmic portion of the chain corresponds to 1-8 (MELSRRNR). A helical transmembrane segment spans residues 9–29 (SLLSVVLNLLALSFSVAAFFT). Over 30–125 (SYWCEGTHKV…IELSPDSEKG (96 aa)) the chain is Extracellular. Residues 126–146 (VLWLSVISEFLYIILLSLGFL) form a helical membrane-spanning segment. The Cytoplasmic segment spans residues 147–166 (LMCLEFFSSSNFIDGLKINA). Residues 167–187 (FAAIITVLSGLLGMVAHMMYM) form a helical membrane-spanning segment. The Extracellular portion of the chain corresponds to 188-209 (TVFQVTVNLGPKDWRPQTWYYG). The chain crosses the membrane as a helical span at residues 210 to 230 (WSFGLAWLSFTLCMSASVLTL). Residues 231–322 (NTYTKTILEF…MDLEDDGDQC (92 aa)) lie on the Cytoplasmic side of the membrane.

The protein belongs to the GSG1 family. As to quaternary structure, component of the AMPAR complex.

The protein resides in the cell membrane. Its subcellular location is the synapse. As a component of the AMPAR complex, modifies AMPA receptor (AMPAR) gating. This is Germ cell-specific gene 1-like protein (gsg1l) from Xenopus tropicalis (Western clawed frog).